A 195-amino-acid polypeptide reads, in one-letter code: HTH-type transcriptional regulator BetI (195 aa).

The 61-residue stretch at 8–68 (SIRRRQLIDA…ATMRDITSQL (61 aa)) folds into the HTH tetR-type domain. Positions 31 to 50 (TIAQIARRAGVSTGIISHYF) form a DNA-binding region, H-T-H motif.

The protein operates within amine and polyamine biosynthesis; betaine biosynthesis via choline pathway [regulation]. In terms of biological role, repressor involved in the biosynthesis of the osmoprotectant glycine betaine. It represses transcription of the choline transporter BetT and the genes of BetAB involved in the synthesis of glycine betaine. This chain is HTH-type transcriptional regulator BetI, found in Escherichia coli (strain K12 / DH10B).